The chain runs to 248 residues: Urease accessory protein UreG 1 (248 aa).

A compositionally biased stretch (basic and acidic residues) spans 1–14; the sequence is MLPEHHDHGHEHGG. Positions 1–36 are disordered; that stretch reads MLPEHHDHGHEHGGNGHGHGHRHQVNFDPTAAEPDP. 53–60 is a GTP binding site; the sequence is GPVGSGKT.

It belongs to the SIMIBI class G3E GTPase family. UreG subfamily. Homodimer. UreD, UreF and UreG form a complex that acts as a GTP-hydrolysis-dependent molecular chaperone, activating the urease apoprotein by helping to assemble the nickel containing metallocenter of UreC. The UreE protein probably delivers the nickel.

It localises to the cytoplasm. In terms of biological role, facilitates the functional incorporation of the urease nickel metallocenter. This process requires GTP hydrolysis, probably effectuated by UreG. This chain is Urease accessory protein UreG 1, found in Saccharopolyspora erythraea (strain ATCC 11635 / DSM 40517 / JCM 4748 / NBRC 13426 / NCIMB 8594 / NRRL 2338).